A 61-amino-acid chain; its full sequence is Small venom protein 1 (61 aa).

Residues 1–20 form the signal peptide; that stretch reads MRCVAIFLVVICAFVLQALA.

In terms of tissue distribution, expressed by the venom gland.

It localises to the secreted. The sequence is that of Small venom protein 1 from Pimpla hypochondriaca (Parasitoid wasp).